A 66-amino-acid polypeptide reads, in one-letter code: Myrmicitoxin(1)-Pr5a (66 aa).

A signal peptide spans 1-25 (MRSLYLSFSLTIIFVLVIMHAEAKA). Residues 26–37 (ISEPNAIAEADP) constitute a propeptide that is removed on maturation. Val65 is subject to Valine amide.

This sequence belongs to the formicidae venom clade 3 family. As to expression, expressed by the venom gland.

It localises to the secreted. Toxin that causes a rapid and irreversible paralysis when intrathoracically injected into insects (blowflies). Does not cause spontaneous nocifensive behaviors by intraplantar injection in mice. Exhibits hemolytic and cytotoxic activities on HEK293 cells. This is Myrmicitoxin(1)-Pr5a from Pogonomyrmex rugosus (Desert harvester ant).